We begin with the raw amino-acid sequence, 398 residues long: DNA replication and repair protein RecF (398 aa).

An ATP-binding site is contributed by 30–37 (GRNGFGKT).

This sequence belongs to the RecF family.

Its subcellular location is the cytoplasm. Its function is as follows. The RecF protein is involved in DNA metabolism; it is required for DNA replication and normal SOS inducibility. RecF binds preferentially to single-stranded, linear DNA. It also seems to bind ATP. The sequence is that of DNA replication and repair protein RecF from Corynebacterium efficiens (strain DSM 44549 / YS-314 / AJ 12310 / JCM 11189 / NBRC 100395).